The sequence spans 374 residues: P2Y purinoceptor 2 (374 aa).

The Extracellular portion of the chain corresponds to M1–K32. Residues N9 and N13 are each glycosylated (N-linked (GlcNAc...) asparagine). A helical transmembrane segment spans residues Y33–L59. Over C60–T70 the chain is Cytoplasmic. A helical membrane pass occupies residues Y71 to Y93. The Extracellular segment spans residues A94–R110. Cysteines 106 and 183 form a disulfide. Residues F111–V129 traverse the membrane as a helical segment. Over H130 to R152 the chain is Cytoplasmic. A helical transmembrane segment spans residues V153–V172. Residues T173–H194 lie on the Extracellular side of the membrane. Residues F195–L220 form a helical membrane-spanning segment. Over M221–T245 the chain is Cytoplasmic. The chain crosses the membrane as a helical span at residues I246 to Y268. At S269 to A286 the chain is on the extracellular side. A helical membrane pass occupies residues Y287–A308. The Cytoplasmic segment spans residues G309–L374. The disordered stretch occupies residues D318 to L374. The segment covering A331 to P340 has biased composition (basic residues). The span at N341–E361 shows a compositional bias: basic and acidic residues.

Belongs to the G-protein coupled receptor 1 family.

The protein localises to the cell membrane. Its function is as follows. Receptor for ATP and UTP coupled to G-proteins that activate a phosphatidylinositol-calcium second messenger system. The affinity range is UTP = ATP &gt; ATP-gamma-S &gt;&gt; 2-methylthio-ATP = ADP. In Rattus norvegicus (Rat), this protein is P2Y purinoceptor 2 (P2ry2).